The following is a 527-amino-acid chain: Light-independent protochlorophyllide reductase subunit B (527 aa).

Position 36 (D36) interacts with [4Fe-4S] cluster. D290 functions as the Proton donor in the catalytic mechanism. 425–426 serves as a coordination point for substrate; that stretch reads GL.

Belongs to the ChlB/BchB/BchZ family. As to quaternary structure, protochlorophyllide reductase is composed of three subunits; ChlL, ChlN and ChlB. Forms a heterotetramer of two ChlB and two ChlN subunits. It depends on [4Fe-4S] cluster as a cofactor.

The enzyme catalyses chlorophyllide a + oxidized 2[4Fe-4S]-[ferredoxin] + 2 ADP + 2 phosphate = protochlorophyllide a + reduced 2[4Fe-4S]-[ferredoxin] + 2 ATP + 2 H2O. It participates in porphyrin-containing compound metabolism; chlorophyll biosynthesis (light-independent). Functionally, component of the dark-operative protochlorophyllide reductase (DPOR) that uses Mg-ATP and reduced ferredoxin to reduce ring D of protochlorophyllide (Pchlide) to form chlorophyllide a (Chlide). This reaction is light-independent. The NB-protein (ChlN-ChlB) is the catalytic component of the complex. This is Light-independent protochlorophyllide reductase subunit B from Synechococcus sp. (strain RCC307).